The primary structure comprises 206 residues: MPIEIPTDLTPELVPFAWLLGTWEGNGFMGYGDAEQRAFRQRVTFEQTGLPFVIYRAQTTLLDEEGEPQREATYEQGFWELARPREDGDIGPGMLPPDPVPVLTSAEDVEKLRNADGGFDISVSILQPGGVAELYLGQIKGPRVDLRTDAVIRAQGAKEYQSGTRLYGLVNNHLMWAWDMAADGRELATHASAELTRIEPAAPSGS.

A GXWXGXG motif is present at residues 21 to 27 (GTWEGNG). His-190 contacts heme b.

It belongs to the nitrobindin family. As to quaternary structure, homodimer. Heme b serves as cofactor.

It catalyses the reaction peroxynitrite = nitrate. Its pathway is nitrogen metabolism. Heme-binding protein able to scavenge peroxynitrite and to protect free L-tyrosine against peroxynitrite-mediated nitration, by acting as a peroxynitrite isomerase that converts peroxynitrite to nitrate. Therefore, this protein likely plays a role in peroxynitrite sensing and in the detoxification of reactive nitrogen and oxygen species (RNS and ROS, respectively). Is able to bind nitric oxide (NO) in vitro, but may act as a sensor of peroxynitrite levels in vivo. In Kocuria rhizophila (strain ATCC 9341 / DSM 348 / NBRC 103217 / DC2201), this protein is Peroxynitrite isomerase.